A 257-amino-acid chain; its full sequence is Phosphonates import ATP-binding protein PhnC (257 aa).

The ABC transporter domain occupies 7 to 251; that stretch reads IQLKDVSKIY…VFTDIYNGGD (245 aa). 40–47 is a binding site for ATP; that stretch reads GLSGAGKS.

It belongs to the ABC transporter superfamily. Phosphonates importer (TC 3.A.1.9.1) family. The complex is composed of two ATP-binding proteins (PhnC), two transmembrane proteins (PhnE) and a solute-binding protein (PhnD).

Its subcellular location is the cell membrane. It catalyses the reaction phosphonate(out) + ATP + H2O = phosphonate(in) + ADP + phosphate + H(+). Functionally, part of the ABC transporter complex PhnCDE involved in phosphonates import. Responsible for energy coupling to the transport system. The chain is Phosphonates import ATP-binding protein PhnC from Lactobacillus acidophilus (strain ATCC 700396 / NCK56 / N2 / NCFM).